Reading from the N-terminus, the 270-residue chain is 4-hydroxy-tetrahydrodipicolinate reductase (270 aa).

NAD(+) is bound by residues 11 to 16 (GAGGRM) and E37. Residue R38 coordinates NADP(+). Residues 101–103 (GTT) and 125–128 (APNM) each bind NAD(+). Catalysis depends on H158, which acts as the Proton donor/acceptor. H159 is a binding site for (S)-2,3,4,5-tetrahydrodipicolinate. The active-site Proton donor is the K162. (S)-2,3,4,5-tetrahydrodipicolinate is bound at residue 168–169 (GT).

Belongs to the DapB family.

Its subcellular location is the cytoplasm. The catalysed reaction is (S)-2,3,4,5-tetrahydrodipicolinate + NAD(+) + H2O = (2S,4S)-4-hydroxy-2,3,4,5-tetrahydrodipicolinate + NADH + H(+). The enzyme catalyses (S)-2,3,4,5-tetrahydrodipicolinate + NADP(+) + H2O = (2S,4S)-4-hydroxy-2,3,4,5-tetrahydrodipicolinate + NADPH + H(+). It participates in amino-acid biosynthesis; L-lysine biosynthesis via DAP pathway; (S)-tetrahydrodipicolinate from L-aspartate: step 4/4. In terms of biological role, catalyzes the conversion of 4-hydroxy-tetrahydrodipicolinate (HTPA) to tetrahydrodipicolinate. The chain is 4-hydroxy-tetrahydrodipicolinate reductase from Shewanella sp. (strain MR-4).